The primary structure comprises 174 residues: 3-hydroxydecanoyl-[acyl-carrier-protein] dehydratase (174 aa).

Histidine 73 is a catalytic residue.

Belongs to the thioester dehydratase family. FabA subfamily. Homodimer.

It is found in the cytoplasm. It carries out the reaction a (3R)-hydroxyacyl-[ACP] = a (2E)-enoyl-[ACP] + H2O. The enzyme catalyses (3R)-hydroxydecanoyl-[ACP] = (2E)-decenoyl-[ACP] + H2O. It catalyses the reaction (2E)-decenoyl-[ACP] = (3Z)-decenoyl-[ACP]. Its pathway is lipid metabolism; fatty acid biosynthesis. Necessary for the introduction of cis unsaturation into fatty acids. Catalyzes the dehydration of (3R)-3-hydroxydecanoyl-ACP to E-(2)-decenoyl-ACP and then its isomerization to Z-(3)-decenoyl-ACP. Can catalyze the dehydratase reaction for beta-hydroxyacyl-ACPs with saturated chain lengths up to 16:0, being most active on intermediate chain length. The protein is 3-hydroxydecanoyl-[acyl-carrier-protein] dehydratase of Teredinibacter turnerae (strain ATCC 39867 / T7901).